Consider the following 243-residue polypeptide: Toxin CcTX-1 (243 aa).

A compositionally biased stretch (basic and acidic residues) spans 1 to 25; it reads SSPEKKNDMSKPGRMRFDNKKEPRS. The disordered stretch occupies residues 1–48; the sequence is SSPEKKNDMSKPGRMRFDNKKEPRSSAKNSGNGYGCVDVNAGREPLTG.

Post-translationally, contains disulfide bonds. As to expression, nematocytes.

Its subcellular location is the secreted. The protein localises to the nematocyst. It is found in the target cell membrane. Its function is as follows. Has potent hemolytic activity. Is lethal to crayfish. Causes cutaneous inflammation in humans. May act as a pore-forming toxin, disrupting normal transmembrane ion concentration gradients in susceptible cells. This chain is Toxin CcTX-1, found in Cyanea capillata (Lion's mane jellyfish).